The chain runs to 34 residues: Omega/M-ectatotoxin-Et1a subunit B (34 aa).

Cys10 and Cys32 are disulfide-bonded.

Belongs to the ectatomin family. Ectatomin-Et subfamily. In terms of assembly, heterodimer of an A and a B chain; disulfide-linked. In terms of tissue distribution, expressed by the venom gland.

It localises to the secreted. Its subcellular location is the target cell membrane. Its function is as follows. Algogenic for animals, human and insects. At high concentrations (0.5-1 uM), it acts as a pore-forming protein that forms nonselective cation channels both in cell and artificial membranes. It is weakly selective for cation over anions channel conductance is identical in both directions. At lower concentrations (1-10 nM), this heterodimer inhibits cardiac L-type calcium currents in isolated rat cardiac ventricular myocytes. The sequence is that of Omega/M-ectatotoxin-Et1a subunit B from Ectatomma tuberculatum (Selva ant).